Consider the following 589-residue polypeptide: Inactive poly [ADP-ribose] polymerase RCD1 (589 aa).

Residues 64 to 153 (KLSAYENRSG…ETGAKTPLAW (90 aa)) form the WWE domain. Residues 248–469 (EAAVSKWDET…LIAKRDNSGV (222 aa)) form the PARP catalytic domain. Disordered regions lie at residues 464–504 (RDNS…TRPK) and 569–589 (QPKSKEIPGSIRDHEEGAGGL). Polar residues predominate over residues 481-503 (LESNQGARGSGSANSVGSSTTRP). The region spanning 501-572 (TRPKSPWMPF…ITTLQNQPKS (72 aa)) is the RST domain. The segment covering 571–589 (KSKEIPGSIRDHEEGAGGL) has biased composition (basic and acidic residues).

As to quaternary structure, interacts with the transcription factors NAC013/NTL1 and NAC046. Interacts with dehydration-responsive DREB2 proteins and a number of transcription factors belonging to several protein families. Interacts with turnip crinkle virus (TCV) movement protein P8. As to expression, expressed in young developing tissues, such as young leaves and flowers and root tips. In mature plants, expressed in vasculature of leaves and roots, and guard cells.

It is found in the nucleus matrix. Inactive ADP-ribosyltransferase that functions with SRO1 to regulate oxidative stress, hormonal and developmental responses. Required for embryogenesis, vegetative and reproductive development, and abiotic stress responses. May regulate several stress-responsive genes. Seems to play a larger developmental role than SRO1. Does not bind NAD in vitro. In Arabidopsis thaliana (Mouse-ear cress), this protein is Inactive poly [ADP-ribose] polymerase RCD1 (RCD1).